A 327-amino-acid chain; its full sequence is Dolichyl-phosphate beta-glucosyltransferase (327 aa).

Residues M1–G15 lie on the Lumenal side of the membrane. The helical transmembrane segment at I16–L36 threads the bilayer. At H37–S327 the chain is on the cytoplasmic side.

Belongs to the glycosyltransferase 2 family.

The protein localises to the endoplasmic reticulum membrane. The enzyme catalyses a di-trans,poly-cis-dolichyl phosphate + UDP-alpha-D-glucose = a di-trans,poly-cis-dolichyl beta-D-glucosyl phosphate + UDP. It participates in protein modification; protein glycosylation. In terms of biological role, endoplasmic reticulum membrane-bound UDP-glucose:dolichyl-phosphate glucosyltransferase involved in protein N-linked glycosylation. The sequence is that of Dolichyl-phosphate beta-glucosyltransferase (alg5) from Dictyostelium discoideum (Social amoeba).